Reading from the N-terminus, the 497-residue chain is Nucleoside transporter 1 (497 aa).

Residues 1–26 (MSLKGGTAAPAPMAPPRKWYDMTSAE) lie on the Cytoplasmic side of the membrane. The helical transmembrane segment at 27–47 (FYVYVVAFMCGISIMMPINAV) threads the bilayer. Topologically, residues 48-77 (FSAPSYMLEYYLYATKDPFLVPKMTNFWTN) are extracellular. The chain crosses the membrane as a helical span at residues 78 to 98 (VMTYYNLISMVTSLVVEPLTL). At 99–107 (LKSFRKIPM) the chain is on the cytoplasmic side. Residues 108-128 (LVRLLGGLSVLIIEIIVLMVV) traverse the membrane as a helical segment. Topologically, residues 129 to 135 (PARGTTE) are extracellular. Residues 136-156 (AGAVATMCIAGFIGGLGTSIF) traverse the membrane as a helical segment. At 157–172 (ESTVYGMFGAFPPSFT) the chain is on the cytoplasmic side. Residues 173 to 193 (SIMMGGVGISGVLTSLIQIIV) traverse the membrane as a helical segment. Topologically, residues 194–208 (KAALPDTYEGVKKQS) are extracellular. The chain crosses the membrane as a helical span at residues 209–229 (YIYYSLDVGIQAATFIALIMM). At 230-337 (RFNSFAQLHF…SVFSVLRSVK (108 aa)) the chain is on the cytoplasmic side. Over residues 286 to 299 (NAEAHKDDPLAERE) the composition is skewed to basic and acidic residues. Positions 286 to 316 (NAEAHKDDPLAERELSEEESGDSRAVEAAGE) are disordered. A helical transmembrane segment spans residues 338 to 358 (WMFVACGFNFLITLFLFPGIA). The Extracellular segment spans residues 359 to 361 (TGM). A helical transmembrane segment spans residues 362–382 (FPESKWFATVAVFIFNCCDVL). Residues 383 to 400 (GRFSSAFRITWPRRYNQR) are Cytoplasmic-facing. A helical membrane pass occupies residues 401–421 (WIIVAASFARVIFVPLLLLHS). At 422–432 (YHYIPSEAYGY) the chain is on the extracellular side. The chain crosses the membrane as a helical span at residues 433-453 (VMQVVFGLSSGYIASMALVLG). The Cytoplasmic segment spans residues 454 to 465 (PQSKGIDNDGKR). The chain crosses the membrane as a helical span at residues 466–486 (FVAGTLMGISILVGGTIGTVL). Topologically, residues 487-497 (SIMTQTIRETY) are extracellular.

The protein belongs to the SLC29A/ENT transporter (TC 2.A.57) family.

Its subcellular location is the cell membrane. The catalysed reaction is adenosine(in) = adenosine(out). It catalyses the reaction hypoxanthine(out) = hypoxanthine(in). It carries out the reaction inosine(in) = inosine(out). The enzyme catalyses uridine(out) = uridine(in). The catalysed reaction is cytidine(in) = cytidine(out). Functionally, nucleoside transporter with broad substrate specificity. Transports adenosine with high affinity. Can also transport hypoxanthine, inosine, uridine and cytidine. This is Nucleoside transporter 1 from Crithidia fasciculata.